The following is a 276-amino-acid chain: Omega-amidase NIT2-A (276 aa).

The CN hydrolase domain maps to 4-248 (FKLSLVQFLV…ETVLSAEIDL (245 aa)). Glu-43 acts as the Proton acceptor in catalysis. The active-site Proton donor is Lys-112. Cys-153 acts as the Nucleophile in catalysis.

The protein belongs to the carbon-nitrogen hydrolase superfamily. NIT1/NIT2 family. In terms of assembly, homodimer.

The protein resides in the cytoplasm. It catalyses the reaction 2-oxoglutaramate + H2O = 2-oxoglutarate + NH4(+). The enzyme catalyses 2-oxosuccinamate + H2O = oxaloacetate + NH4(+). In terms of biological role, has omega-amidase activity. The role of omega-amidase is to remove potentially toxic intermediates by converting 2-oxoglutaramate and 2-oxosuccinamate to biologically useful 2-oxoglutarate and oxaloacetate, respectively. The polypeptide is Omega-amidase NIT2-A (nit2a) (Xenopus laevis (African clawed frog)).